The chain runs to 554 residues: DDB1- and CUL4-associated factor 11 homolog (554 aa).

The segment at 24 to 52 is disordered; the sequence is QRMKNRNDSDTDFSDDDEETSGGCPKMTP. A compositionally biased stretch (acidic residues) spans 33-43; that stretch reads DTDFSDDDEET. WD repeat units follow at residues 245–284, 288–328, 336–375, 414–458, and 461–500; these read QNQCAVFCVRFSDDSEQIVCGTSEYSIHVFDVEQRRRIRT, AHED…DGDV, GHRDGVTYVDSRQDERYLLSNSKDQTIKVWDLRKFSCQGG, GHSV…VSRR, and GHQAVVRECDWHPQENEIVSTSWDGVTTVWTWDERAEGVI. The disordered stretch occupies residues 527–554; that stretch reads PQRKLRKPISARNAKCPTTSSEPDDFQI.

The protein belongs to the WD repeat LEC14B family.

In terms of biological role, involved in regulation of lifespan. Required for dopaminergic CEP neuron degeneration in response to Mn(2+). The sequence is that of DDB1- and CUL4-associated factor 11 homolog (wdr-23) from Caenorhabditis briggsae.